Reading from the N-terminus, the 137-residue chain is Large ribosomal subunit protein uL16 (137 aa).

Over residues 1 to 17 (MLQPKRTKFRKQQKGRN) the composition is skewed to basic residues. Residues 1–24 (MLQPKRTKFRKQQKGRNRGLAQSG) form a disordered region.

It belongs to the universal ribosomal protein uL16 family. Part of the 50S ribosomal subunit.

Binds 23S rRNA and is also seen to make contacts with the A and possibly P site tRNAs. This Dichelobacter nodosus (strain VCS1703A) protein is Large ribosomal subunit protein uL16.